The sequence spans 681 residues: Proline dehydrogenase 1, mitochondrial (681 aa).

The transit peptide at 1–30 directs the protein to the mitochondrion; the sequence is MALLRSLSAQRTAISLVYGRNSSKSSNSVA. The span at 76 to 87 shows a compositional bias: polar residues; it reads STLVQPEVVSSE. Disordered regions lie at residues 76–113 and 216–239; these read STLV…QRDP and EEAE…EGSM. Basic and acidic residues predominate over residues 88 to 99; the sequence is TVKRSMKQESSQ.

This sequence belongs to the proline oxidase family. It depends on FAD as a cofactor. In terms of tissue distribution, most abundant in developing nervous system.

It is found in the mitochondrion matrix. The catalysed reaction is L-proline + a quinone = (S)-1-pyrroline-5-carboxylate + a quinol + H(+). Its pathway is amino-acid degradation; L-proline degradation into L-glutamate; L-glutamate from L-proline: step 1/2. Its function is as follows. Converts proline to delta-1-pyrroline-5-carboxylate. Involved in the conversion of proline to glutamate, which functions as a transmitter at neuromuscular junctions. Glutamate deficiency could possibly account for reduced motor activity. This Drosophila melanogaster (Fruit fly) protein is Proline dehydrogenase 1, mitochondrial (slgA).